The sequence spans 38 residues: Alpha-conotoxin LvIC (38 aa).

The propeptide occupies 1 to 21 (SNGRNAAAGDKPSYWITLAIT). 2 disulfide bridges follow: Cys-23-Cys-29 and Cys-24-Cys-34. Residue Gln-35 is modified to Glutamine amide.

It belongs to the conotoxin A superfamily. In terms of processing, the two analogs ([DelQ14]LvIC and [D1G,DelQ14]LvIC) are amidated at their N-terminal Cys. In terms of tissue distribution, expressed by the venom gland.

It localises to the secreted. In terms of biological role, alpha-conotoxins bind to the nicotinic acetylcholine receptors (nAChR) and inhibit them. This synthetic peptide inhibits rat alpha-6/alpha-3-beta-4 nAChR (IC(50)=3.3 uM). The sequence is that of Alpha-conotoxin LvIC from Conus lividus (Livid cone).